Consider the following 28-residue polypeptide: Phospholipase A2 3 (28 aa).

Belongs to the phospholipase A2 family. Group I subfamily. It depends on Ca(2+) as a cofactor. As to expression, expressed by the venom gland.

Its subcellular location is the secreted. The catalysed reaction is a 1,2-diacyl-sn-glycero-3-phosphocholine + H2O = a 1-acyl-sn-glycero-3-phosphocholine + a fatty acid + H(+). Its function is as follows. Snake venom phospholipase A2 (PLA2) that inhibits neuromuscular transmission by blocking acetylcholine release from the nerve termini. PLA2 catalyzes the calcium-dependent hydrolysis of the 2-acyl groups in 3-sn-phosphoglycerides. The polypeptide is Phospholipase A2 3 (Micrurus nigrocinctus (Central American coral snake)).